Consider the following 129-residue polypeptide: Ribosome-binding factor A (129 aa).

Belongs to the RbfA family. Monomer. Binds 30S ribosomal subunits, but not 50S ribosomal subunits or 70S ribosomes.

It is found in the cytoplasm. Its function is as follows. One of several proteins that assist in the late maturation steps of the functional core of the 30S ribosomal subunit. Associates with free 30S ribosomal subunits (but not with 30S subunits that are part of 70S ribosomes or polysomes). Required for efficient processing of 16S rRNA. May interact with the 5'-terminal helix region of 16S rRNA. This Pseudomonas aeruginosa (strain UCBPP-PA14) protein is Ribosome-binding factor A.